Reading from the N-terminus, the 892-residue chain is Alanine--tRNA ligase (892 aa).

Residues His596, His600, Cys700, and His704 each contribute to the Zn(2+) site.

This sequence belongs to the class-II aminoacyl-tRNA synthetase family. Zn(2+) serves as cofactor.

The protein resides in the cytoplasm. The enzyme catalyses tRNA(Ala) + L-alanine + ATP = L-alanyl-tRNA(Ala) + AMP + diphosphate. Its function is as follows. Catalyzes the attachment of alanine to tRNA(Ala) in a two-step reaction: alanine is first activated by ATP to form Ala-AMP and then transferred to the acceptor end of tRNA(Ala). Also edits incorrectly charged Ser-tRNA(Ala) and Gly-tRNA(Ala) via its editing domain. This Methanococcus maripaludis (strain DSM 14266 / JCM 13030 / NBRC 101832 / S2 / LL) protein is Alanine--tRNA ligase.